A 151-amino-acid polypeptide reads, in one-letter code: 3-hydroxyacyl-[acyl-carrier-protein] dehydratase FabZ (151 aa).

His57 is a catalytic residue.

This sequence belongs to the thioester dehydratase family. FabZ subfamily.

It is found in the cytoplasm. The enzyme catalyses a (3R)-hydroxyacyl-[ACP] = a (2E)-enoyl-[ACP] + H2O. Involved in unsaturated fatty acids biosynthesis. Catalyzes the dehydration of short chain beta-hydroxyacyl-ACPs and long chain saturated and unsaturated beta-hydroxyacyl-ACPs. The sequence is that of 3-hydroxyacyl-[acyl-carrier-protein] dehydratase FabZ from Prochlorococcus marinus (strain SARG / CCMP1375 / SS120).